The chain runs to 154 residues: PTS system glucose-specific EIIA component (154 aa).

The PTS EIIA type-1 domain occupies 26–130 (DEVFKERMLG…SIKSPIIFTN (105 aa)). The Zn(2+) site is built by His-63 and His-78. Catalysis depends on His-78, which acts as the Tele-phosphohistidine intermediate; for EIIA activity. His-78 bears the Phosphohistidine; by HPr mark.

Heterodimer with glycerol kinase (glpk). Zn(2+) serves as cofactor.

It localises to the cytoplasm. In terms of biological role, the phosphoenolpyruvate-dependent sugar phosphotransferase system (sugar PTS), a major carbohydrate active transport system, catalyzes the phosphorylation of incoming sugar substrates concomitantly with their translocation across the cell membrane. The enzyme II complex composed of PtsG and Crr is involved in glucose transport. The polypeptide is PTS system glucose-specific EIIA component (crr) (Mycoplasma capricolum subsp. capricolum (strain California kid / ATCC 27343 / NCTC 10154)).